A 197-amino-acid chain; its full sequence is MPAEVHGSPPASLCPCPSVKFRPGLPAMALLTALDDTLPEEAQGPGRRMILLSTPSQSDALRACFERNLYPGIATKEQLAQGIDIPEPRVQIWFQNERSCQLRQHRRQSRPWPGRRDPQKGRRKRTAITGSQTALLLRAFEKDRFPGIPAREELARETGLPESRIQLWFQNRRARHWGQSGRAPTQASIRCNAAPIG.

2 DNA-binding regions (homeobox) span residues 46-105 (GRRM…LRQH) and 121-180 (GRRK…WGQS). A disordered region spans residues 102–127 (LRQHRRQSRPWPGRRDPQKGRRKRTA).

The protein belongs to the paired homeobox family. As to expression, expressed in hepatoma Hep3B cells.

The protein localises to the nucleus. This Homo sapiens (Human) protein is Putative double homeobox protein 3 (DUX3).